A 577-amino-acid polypeptide reads, in one-letter code: DNA-directed RNA polymerase subunit alpha (577 aa).

Residues 1-461 (MIKIIIKETF…QLFLPLQQIR (461 aa)) are alpha N-terminal domain (alpha-NTD). An alpha C-terminal domain (alpha-CTD) region spans residues 510 to 577 (FDHRLLELDI…ALQLMKLTLK (68 aa)).

This sequence belongs to the RNA polymerase alpha chain family. In terms of assembly, in plastids the minimal PEP RNA polymerase catalytic core is composed of four subunits: alpha, beta, beta', and beta''. When a (nuclear-encoded) sigma factor is associated with the core the holoenzyme is formed, which can initiate transcription.

The protein resides in the plastid. Its subcellular location is the chloroplast. The catalysed reaction is RNA(n) + a ribonucleoside 5'-triphosphate = RNA(n+1) + diphosphate. In terms of biological role, DNA-dependent RNA polymerase catalyzes the transcription of DNA into RNA using the four ribonucleoside triphosphates as substrates. This is DNA-directed RNA polymerase subunit alpha from Tupiella akineta (Green alga).